Reading from the N-terminus, the 239-residue chain is NAD(P)H-hydrate epimerase (239 aa).

The 207-residue stretch at alanine 14–isoleucine 220 folds into the YjeF N-terminal domain. Position 64 to 68 (asparagine 64 to aspartate 68) interacts with (6S)-NADPHX. Asparagine 65 and aspartate 126 together coordinate K(+). Residues glycine 130 to glutamate 136 and aspartate 159 contribute to the (6S)-NADPHX site. A K(+)-binding site is contributed by serine 162.

It belongs to the NnrE/AIBP family. The cofactor is K(+).

Its subcellular location is the cytoplasm. The protein resides in the mitochondrion. The catalysed reaction is (6R)-NADHX = (6S)-NADHX. It carries out the reaction (6R)-NADPHX = (6S)-NADPHX. Functionally, catalyzes the epimerization of the S- and R-forms of NAD(P)HX, a damaged form of NAD(P)H that is a result of enzymatic or heat-dependent hydration. This is a prerequisite for the S-specific NAD(P)H-hydrate dehydratase to allow the repair of both epimers of NAD(P)HX. This chain is NAD(P)H-hydrate epimerase, found in Phaeosphaeria nodorum (strain SN15 / ATCC MYA-4574 / FGSC 10173) (Glume blotch fungus).